The sequence spans 484 residues: UDP-glycosyltransferase 73B4 (484 aa).

The active-site Proton acceptor is H18. An anthocyanidin contacts are provided by H18 and N89. D129 serves as the catalytic Charge relay. The UDP-alpha-D-glucose site is built by A356, Q358, H373, W376, N377, S378, and E381. Residue A396 participates in an anthocyanidin binding. E397 and Q398 together coordinate UDP-alpha-D-glucose.

Belongs to the UDP-glycosyltransferase family. As to expression, specifically expressed in roots.

It carries out the reaction a flavonol + UDP-alpha-D-glucose = a flavonol 3-O-beta-D-glucoside + UDP + H(+). Its function is as follows. Possesses quercetin 3-O-glucosyltransferase and low 7-O-glucosyltransferase activities in vitro. Also active in vitro on benzoates and benzoate derivatives. Can detoxify the explosive 2,4,6-trinitrotoluene in plant by forming O- or C-glucose conjugates. In Arabidopsis thaliana (Mouse-ear cress), this protein is UDP-glycosyltransferase 73B4 (UGT73B4).